The following is a 4558-amino-acid chain: Multifunctional-autoprocessing repeats-in-toxin (4558 aa).

The signal sequence occupies residues 1–32; sequence MVFYLIPKRRVWLMGKPFWRSVEYFFTGNYSA. 39 RtxA repeats span residues 114-131, 134-151, 154-170, 174-197, 200-217, 220-237, 268-285, 288-304, 594-611, 614-630, 634-651, 654-668, 751-763, 769-781, 792-808, 811-826, 830-845, 851-865, 868-885, 887-901, 906-920, 925-942, 944-960, 982-994, 1001-1016, 1041-1053, 1077-1089, 1097-1112, 1120-1132, 1135-1152, 1155-1169, 1173-1189, 1194-1209, 1211-1227, 1230-1246, 1252-1266, 1268-1285, 1306-1323, and 1325-1342; these read GAAGGVSIDHLGNHGDVS, GAAAYNGITRKGLSGNVT, GAGGYNALWHETNQGNL, GAGAGNKLDRTWSNRYQGSHGDVT, GAGAANSISSRVETGNIT, GAGADNHLVRKGKVGDIT, GVGGYNSLYSDVAHGDIH, GGGAYNTIIRKGSGNDF, GAGGGNVIKSNVTRGNVH, GGGIANVILHSSQFGNT, GGGAANVIVKSGEEGDLT, GAGLANVLVHQSEQG, AGGANVLTKMGEG, MLGGANVITHISN, ALGGANILTKKGKGNTL, MGGGANVLTHVGDGTT, MVGGANILTKVGNGDT, GVGNVLTHVGDGQTL, MGAAGNIFTKVGDGTSIA, MIGAGNIFTHVGEGN, MGGLGNVFTKVGNGD, MVAEANVFTHIGDGMSVA, MLAKGNVATKVGNGTTL, MIGQANIMTKVGN, MVGKANIMTHVGDGTS, GKANIMTHVGDGL, AAAKANVVTHVGD, AGKGNILTKVGEGTTV, GNVMTHVGDGTTI, AKGKANLITKVGDGLGVN, WGQANVFTQVGDGDR, AKGEANLITKVGDGQEV, GEANIITHVGNGDDYT, AWGKANVITKVGHGQNV, AKGEANIVTQVGDGDSF, KGNIVTKVGDGMQVT, AKGQANITTTVGNGLNVT, AWGKYNINTKVGDGLNVA, and MKGKANANIHVGDGLNIN. Disordered regions lie at residues 1623-1688, 1752-1779, and 1791-1890; these read HATQ…KEES, TLSDNNSKVKESVAKSEAGVAQGEQNRA, and DAEK…NADG. Polar residues predominate over residues 1625–1634; it reads TQNPAAQNAL. Over residues 1635 to 1654 the composition is skewed to basic and acidic residues; that stretch reads SDKERAEADRQRLEQEKQKQ. Polar residues predominate over residues 1660-1679; the sequence is GSQSQLESTDQQALENNGQA. A compositionally biased stretch (basic and acidic residues) spans 1791–1815; that stretch reads DAEKRKADALAKGKDAQQAESDAHH. Residues 1879 to 1888 show a composition bias toward polar residues; sequence HVNTDSQTNA. The region spanning 1988–2422 is the ACD domain; sequence VPGFKSHFAS…HAEQWAKITA (435 aa). Residue 1999-2003 participates in ATP binding; sequence SIGIE. Residues E2003, E2065, and Q2149 each contribute to the Mg(2+) site. R2255 contributes to the ATP binding site. E2326 serves as a coordination point for Mg(2+). The segment at 2574 to 2658 is membrane localization region (MLD); sequence ELMSVTELLD…SLLNQVNTRL (85 aa). Residues 2734 to 3098 form a rho inactivation domain (RID) region; the sequence is EYGQTVADTI…HQVTDVLDAL (365 aa). The ABH effector region stretch occupies residues 3195 to 3310; it reads VVLFLHGSGS…MPSMTKAITA (116 aa). The interval 3404-3426 is disordered; the sequence is ASVDEDLDQQGLDTTSTKDQGIS. Positions 3414-3426 are enriched in polar residues; it reads GLDTTSTKDQGIS. In terms of domain architecture, Peptidase C80 spans 3462–3646; the sequence is PTTDGGETRF…AENNKVSLSW (185 aa). 1D-myo-inositol hexakisphosphate is bound by residues 3468-3470, 3495-3496, and R3526; these read ETR and KH. The active-site For cysteine protease activity is the H3532. S3577 lines the 1D-myo-inositol hexakisphosphate pocket. The active-site Nucleophile; for cysteine protease activity is the C3581. 1D-myo-inositol hexakisphosphate is bound by residues 3610 to 3612, 3623 to 3624, K3636, and K3641; these read SVR and RK.

The cofactor is Mg(2+).

It is found in the secreted. The protein resides in the host cytoplasm. Its subcellular location is the host cytosol. The protein localises to the host cell membrane. It carries out the reaction L-lysyl-/S-(2E,6E,10E)-geranylgeranyl-L-cysteinyl-[protein] + hexadecanoyl-CoA = N(6)-hexadecanoyl-L-lysyl-/S-(2E,6E,10E)-geranylgeranyl-L-cysteinyl-[protein] + CoA + H(+). It catalyses the reaction L-lysyl-/S-(2E,6E,10E)-geranylgeranyl-L-cysteinyl-[protein] + dodecanoyl-CoA = N(6)-dodecanoyl-L-lysyl-/S-(2E,6E,10E)-geranylgeranyl-L-cysteinyl-[protein] + CoA + H(+). The catalysed reaction is L-lysyl-/S-(2E,6E,10E)-geranylgeranyl-L-cysteinyl-[protein] + decanoyl-CoA = N(6)-decanoyl-L-lysyl-/S-(2E,6E,10E)-geranylgeranyl-L-cysteinyl-[protein] + CoA + H(+). Protease activity is inhibited by N-ethylmaleimide but not other protease inhibitors. Protease activity is inhibited by aza-leucine epoxide. Protease activity is activated upon binding inositol hexakisphosphate (InsP6) via an allosteric mechanism: the active site is disordered or occluded in the absence of InsP6, protecting the protease active-site sulfhydryl until the toxin enters a eukaryotic cell. Upon processing at the Leu-3441-Ala-3442 site, the peptidase C80 domain is converted to a form with much reduced affinity for InsP6, but is reactivated for high affinity binding of InsP6 by cooperative binding of both a new substrate and InsP6. Reactivation allows cleavage at other sites, specifically at Leu residues between the effector domains. In terms of biological role, precursor of a multifunctional toxin that causes destruction of the actin cytoskeleton by covalent cross-linking of actin and inactivation of Rho GTPases when translocated into the host cytoplasm. Upon translocation into the host cell, undergoes autoprocessing in cis mediated by the peptidase C80 domain (also named CPD domain): the protease activity is activated upon binding inositol hexakisphosphate (InsP6) present at the host cell membrane and delivers the Cysteine protease domain-containing toxin F3 chain to the host cytosol. The Cysteine protease domain-containing toxin F3 chain will then further cleave and release effector toxin chains that cause disassembly of the actin cytoskeleton and enhance V.cholerae colonization of the small intestine, possibly by facilitating evasion of phagocytic cells. Functionally, following autocatalytic cleavage in cis at the Leu-3441-Ala-3442 site, this chain mediates processing in trans to release other individual toxin chains to the host cytosol. Released effector toxin chains cause disassembly of the actin cytoskeleton and enhance V.cholerae colonization of the small intestine, possibly by facilitating evasion of phagocytic cells. Its function is as follows. Actin-directed toxin that catalyzes the covalent cross-linking of host cytoplasmic monomeric actin. Mediates the cross-link between 'Lys-50' of one monomer and 'Glu-270' of another actin monomer, resulting in formation of highly toxic actin oligomers that cause cell rounding. The toxin can be highly efficient at very low concentrations by acting on formin homology family proteins: toxic actin oligomers bind with high affinity to formins and adversely affect both nucleation and elongation abilities of formins, causing their potent inhibition in both profilin-dependent and independent manners. Acts as an acid--amino-acid ligase that transfers the gamma-phosphoryl group of ATP to the 'Glu-270' actin residue, resulting in the formation of an activated acyl phosphate intermediate. This intermediate is further hydrolyzed and the energy of hydrolysis is utilized for the formation of the amide bond between actin subunits. N-epsilon-fatty acyltransferase that mediates lysine-palmitoylation of host Rho GTPase proteins, with a strong preference for host Rac1. After delivery to the host cytosol, localizes to the host cell membrane where it palmitoylates host Rho GTPase proteins, resulting in loss of all active GTP-bound Rho and subsequent actin depolymerization. Prenylation of host Rac1 at the C-terminus is required for lysine-palmitoylation. In terms of biological role, indirectly activates the small GTPase CDC42. The protein is Multifunctional-autoprocessing repeats-in-toxin of Vibrio cholerae serotype O1 (strain ATCC 39315 / El Tor Inaba N16961).